The chain runs to 940 residues: Isoleucine--tRNA ligase (940 aa).

Positions 58–68 (PYANGDIHIGH) match the 'HIGH' region motif. Glu-564 contributes to the L-isoleucyl-5'-AMP binding site. A 'KMSKS' region motif is present at residues 605-609 (KMSKS). Lys-608 contacts ATP. Positions 903, 906, 923, and 926 each coordinate Zn(2+).

It belongs to the class-I aminoacyl-tRNA synthetase family. IleS type 1 subfamily. As to quaternary structure, monomer. Zn(2+) serves as cofactor.

It localises to the cytoplasm. The enzyme catalyses tRNA(Ile) + L-isoleucine + ATP = L-isoleucyl-tRNA(Ile) + AMP + diphosphate. In terms of biological role, catalyzes the attachment of isoleucine to tRNA(Ile). As IleRS can inadvertently accommodate and process structurally similar amino acids such as valine, to avoid such errors it has two additional distinct tRNA(Ile)-dependent editing activities. One activity is designated as 'pretransfer' editing and involves the hydrolysis of activated Val-AMP. The other activity is designated 'posttransfer' editing and involves deacylation of mischarged Val-tRNA(Ile). This is Isoleucine--tRNA ligase from Shewanella pealeana (strain ATCC 700345 / ANG-SQ1).